The following is a 337-amino-acid chain: DNA-directed RNA polymerase subunit alpha (337 aa).

The tract at residues 1-233 (MVREKVTVST…DLFIPFLHME (233 aa)) is alpha N-terminal domain (alpha-NTD). Residues 264–337 (NKKIALKSIF…FVIDLAKNKF (74 aa)) form an alpha C-terminal domain (alpha-CTD) region.

This sequence belongs to the RNA polymerase alpha chain family. In plastids the minimal PEP RNA polymerase catalytic core is composed of four subunits: alpha, beta, beta', and beta''. When a (nuclear-encoded) sigma factor is associated with the core the holoenzyme is formed, which can initiate transcription.

It is found in the plastid. The protein localises to the chloroplast. It catalyses the reaction RNA(n) + a ribonucleoside 5'-triphosphate = RNA(n+1) + diphosphate. In terms of biological role, DNA-dependent RNA polymerase catalyzes the transcription of DNA into RNA using the four ribonucleoside triphosphates as substrates. The protein is DNA-directed RNA polymerase subunit alpha of Atropa belladonna (Belladonna).